Consider the following 249-residue polypeptide: uncharacterized protein (249 aa).

Residues 3-23 form a helical membrane-spanning segment; sequence WYWIGLLIVVVLFLLSAVRIV.

Belongs to the band 7/mec-2 family.

It localises to the membrane. This is an uncharacterized protein from Archaeoglobus fulgidus (strain ATCC 49558 / DSM 4304 / JCM 9628 / NBRC 100126 / VC-16).